Here is a 126-residue protein sequence, read N- to C-terminus: Small ribosomal subunit protein uS12 (126 aa).

The tract at residues 1 to 29 (MPTIQQLIRQPRAPKKRRSKSPALQKCPQ) is disordered. Residue Asp89 is modified to 3-methylthioaspartic acid.

Belongs to the universal ribosomal protein uS12 family. Part of the 30S ribosomal subunit. Contacts proteins S8 and S17. May interact with IF1 in the 30S initiation complex.

Functionally, with S4 and S5 plays an important role in translational accuracy. Interacts with and stabilizes bases of the 16S rRNA that are involved in tRNA selection in the A site and with the mRNA backbone. Located at the interface of the 30S and 50S subunits, it traverses the body of the 30S subunit contacting proteins on the other side and probably holding the rRNA structure together. The combined cluster of proteins S8, S12 and S17 appears to hold together the shoulder and platform of the 30S subunit. In Protochlamydia amoebophila (strain UWE25), this protein is Small ribosomal subunit protein uS12.